Reading from the N-terminus, the 367-residue chain is Developmentally-regulated GTP-binding protein 1 (367 aa).

Residue Ser2 is modified to N-acetylserine. Residues 2–16 (SSTLAKIAEIEAEMA) form a required for interaction with STK16 region. Lys22 is subject to (3S)-3-hydroxylysine. The OBG-type G domain maps to 65-290 (ARIGFVGFPS…LLEKIWDYLK (226 aa)). GTP contacts are provided by residues 71–78 (GFPSVGKS), 96–100 (FTTLT), 117–120 (DLPG), 248–251 (NKID), and 271–273 (SAH). Residues Ser78 and Thr98 each coordinate Mg(2+). The residue at position 100 (Thr100) is a Phosphothreonine; by STK16. The TGS domain maps to 290–366 (KLVRIYTKPK…EDEDVIQIVK (77 aa)).

Belongs to the TRAFAC class OBG-HflX-like GTPase superfamily. OBG GTPase family. As to quaternary structure, interacts (via its C-terminal) with TAL1. Interacts with DFRP1/ZC3H15; this interaction prevents DRG1 poly-ubiquitination and degradation by proteasome. DRG1-ZC3H15/DFRP1 complex co-sediments with polysomes. Interacts with STK16. Interacts with JMJD7. Sumoylated by UBE2I in response to MEKK1-mediated stimuli. In terms of processing, hydroxylated (with S stereochemistry) at C-3 of Lys-22 by JMJD7. Post-translationally, phosphorylated at Thr-100 by STK16. Polyubiquitinated; this modification induces proteolytic degradation and is impaired by interaction with ZC3H15.

It localises to the nucleus. It is found in the cytoplasm. It carries out the reaction GTP + H2O = GDP + phosphate + H(+). With respect to regulation, the GTPase activity is enhanced by potassium ions as well as by DFRP1 binding. In terms of biological role, catalyzes the conversion of GTP to GDP through hydrolysis of the gamma-phosphate bond in GTP. Appears to have an intrinsic GTPase activity that is stimulated by ZC3H15/DFRP1 binding likely by increasing the affinity for the potassium ions. When hydroxylated at C-3 of 'Lys-22' by JMJD7, may bind to RNA and play a role in translation. Binds to microtubules and promotes microtubule polymerization and bundling that are required for mitotic spindle assembly during prophase to anaphase transition. GTPase activity is not necessary for these microtubule-related functions. This Bos taurus (Bovine) protein is Developmentally-regulated GTP-binding protein 1 (DRG1).